Here is a 190-residue protein sequence, read N- to C-terminus: Guanylate kinase (190 aa).

The 181-residue stretch at 8-188 folds into the Guanylate kinase-like domain; sequence GRLVILAGPS…AVKAIEDVLL (181 aa). 15–22 contacts ATP; that stretch reads GPSAVGKS.

Belongs to the guanylate kinase family.

The protein resides in the cytoplasm. It catalyses the reaction GMP + ATP = GDP + ADP. Functionally, essential for recycling GMP and indirectly, cGMP. This Corynebacterium glutamicum (strain ATCC 13032 / DSM 20300 / JCM 1318 / BCRC 11384 / CCUG 27702 / LMG 3730 / NBRC 12168 / NCIMB 10025 / NRRL B-2784 / 534) protein is Guanylate kinase.